Consider the following 729-residue polypeptide: Ribosomal RNA large subunit methyltransferase K/L (729 aa).

The THUMP domain occupies 47–158 (TFYRLCLWSR…KNELTLALDL (112 aa)).

It belongs to the methyltransferase superfamily. RlmKL family.

The protein localises to the cytoplasm. The enzyme catalyses guanosine(2445) in 23S rRNA + S-adenosyl-L-methionine = N(2)-methylguanosine(2445) in 23S rRNA + S-adenosyl-L-homocysteine + H(+). The catalysed reaction is guanosine(2069) in 23S rRNA + S-adenosyl-L-methionine = N(2)-methylguanosine(2069) in 23S rRNA + S-adenosyl-L-homocysteine + H(+). Its function is as follows. Specifically methylates the guanine in position 2445 (m2G2445) and the guanine in position 2069 (m7G2069) of 23S rRNA. The chain is Ribosomal RNA large subunit methyltransferase K/L from Dichelobacter nodosus (strain VCS1703A).